Here is a 121-residue protein sequence, read N- to C-terminus: Large ribosomal subunit protein bL21 (121 aa).

The protein belongs to the bacterial ribosomal protein bL21 family. In terms of assembly, part of the 50S ribosomal subunit. Contacts protein L20.

Its function is as follows. This protein binds to 23S rRNA in the presence of protein L20. The protein is Large ribosomal subunit protein bL21 of Synechococcus sp. (strain CC9605).